We begin with the raw amino-acid sequence, 1051 residues long: Transcription intermediary factor 1-alpha (1051 aa).

Residues methionine 1–glutamate 42 form a disordered region. Residue lysine 7 forms a Glycyl lysine isopeptide (Lys-Gly) (interchain with G-Cter in SUMO2) linkage. The segment covering alanine 8–proline 23 has biased composition (low complexity). An RING-type zinc finger spans residues cysteine 52 to cysteine 77. The segment at serine 94 to proline 115 is disordered. Threonine 97 carries the phosphothreonine modification. Residues threonine 97–glycine 109 are compositionally biased toward pro residues. At serine 110 the chain carries Phosphoserine. 2 consecutive B box-type zinc fingers follow at residues lysine 158–glutamate 211 and glutamine 218–isoleucine 259. Zn(2+) is bound by residues cysteine 163, cysteine 166, cysteine 187, and histidine 200. Residue lysine 205 forms a Glycyl lysine isopeptide (Lys-Gly) (interchain with G-Cter in SUMO2) linkage. 4 residues coordinate Zn(2+): cysteine 223, histidine 226, cysteine 246, and histidine 251. A Glycyl lysine isopeptide (Lys-Gly) (interchain with G-Cter in SUMO2) cross-link involves residue lysine 276. Positions asparagine 289 to valine 359 form a coiled coil. The disordered stretch occupies residues glutamate 429 to serine 457. Positions glutamine 431–serine 457 are enriched in polar residues. Glycyl lysine isopeptide (Lys-Gly) (interchain with G-Cter in SUMO2) cross-links involve residues lysine 436 and lysine 458. Residue arginine 469 is modified to Omega-N-methylarginine. 2 stretches are compositionally biased toward low complexity: residues alanine 479–proline 490 and proline 501–glutamine 510. A disordered region spans residues alanine 479 to threonine 551. A compositionally biased stretch (pro residues) spans proline 526 to proline 535. Positions leucine 538 to threonine 551 are enriched in polar residues. Glycyl lysine isopeptide (Lys-Gly) (interchain with G-Cter in SUMO2) cross-links involve residues lysine 553 and lysine 642. The disordered stretch occupies residues threonine 644–valine 713. 3 positions are modified to phosphoserine: serine 655, serine 661, and serine 668. Residues serine 655–proline 667 show a composition bias toward polar residues. A compositionally biased stretch (low complexity) spans serine 686–aspartate 708. Residues lysine 703 and lysine 712 each participate in a glycyl lysine isopeptide (Lys-Gly) (interchain with G-Cter in SUMO2) cross-link. Glycyl lysine isopeptide (Lys-Gly) (interchain with G-Cter in SUMO); alternate cross-links involve residues lysine 724 and lysine 742. Lysine 724 is covalently cross-linked (Glycyl lysine isopeptide (Lys-Gly) (interchain with G-Cter in SUMO1); alternate). Glycyl lysine isopeptide (Lys-Gly) (interchain with G-Cter in SUMO2); alternate cross-links involve residues lysine 724 and lysine 742. Phosphoserine occurs at positions 745 and 769. The tract at residues asparagine 755–arginine 780 is nuclear receptor binding site (NRBS). Residues serine 771–glutamate 827 form a disordered region. Residues glutamine 795–serine 812 are compositionally biased toward polar residues. Lysine 802 is covalently cross-linked (Glycyl lysine isopeptide (Lys-Gly) (interchain with G-Cter in SUMO2)). At serine 809 the chain carries Phosphoserine. Lysine 811 is covalently cross-linked (Glycyl lysine isopeptide (Lys-Gly) (interchain with G-Cter in SUMO2)). Serine 812 carries the post-translational modification Phosphoserine. Position 819 is a phosphothreonine (threonine 819). The PHD-type zinc finger occupies glutamate 827–leucine 874. Residues asparagine 835 to cysteine 841 are interaction with histone H3 that is not methylated at 'Lys-4' (H3K4me0). Residue lysine 876 forms a Glycyl lysine isopeptide (Lys-Gly) (interchain with G-Cter in SUMO2) linkage. The short motif at lysine 892–lysine 908 is the Nuclear localization signal element. A Bromo domain is found at lysine 900–leucine 1005. Residues lysine 950 and lysine 993 each participate in a glycyl lysine isopeptide (Lys-Gly) (interchain with G-Cter in SUMO2) cross-link. A disordered region spans residues lysine 1024–lysine 1051. Serine 1026 and serine 1029 each carry phosphoserine. Lysine 1042 is covalently cross-linked (Glycyl lysine isopeptide (Lys-Gly) (interchain with G-Cter in SUMO2)). Positions lysine 1042–lysine 1051 are enriched in basic and acidic residues. Phosphoserine is present on serine 1043.

In terms of assembly, interacts (via bromo domain) with histone H3 (via N-terminus), provided that it is not methylated at 'Lys-4' (H3K4me0). Does not interact with histone H3 that is methylated at 'Lys-4' (H3K4me1, H3K4me2 or H3K4me3). Interacts (via bromo domain) with histone H3 (via N-terminus) that is acetylated at 'Lys-23' (H3K23ac). Has the highest affinity for histone H3 that is both unmodified at 'Lys-4' (H3K4me0) and acetylated at 'Lys-23' (H3K23ac). Has very low affinity for histone H3 that is methylated at 'Lys-9' (H3K9me), or acetylated at both 'Lys-9' (H3K9ac) and 'Lys-14' (H3K14ac), or acetylated at 'Lys-27' (H3K27ac) (in vitro). Interacts with TRIM16. Interacts with NR3C2/MCR. Interacts with the ligand-binding domain of estrogen receptors (in vitro). Interaction with DNA-bound estrogen receptors requires the presence of estradiol. Interacts with AR, CARM1, KAT5/TIP60, NCOA2/GRIP1, BRD7, CBX1, CBX3 and CBX5. Part of a coactivator complex containing TRIM24, NCOA2/GRIP1 and CARM1. Interacts with p53/TP53 and PML. Post-translationally, sumoylated. Phosphorylated at Ser-768 by ATM kinase induces ubiquitination and degradation during DNA damage. In terms of processing, undergoes ubiquitination-mediated degradation in response to DNA damage. In terms of tissue distribution, detected in embryonic and adult liver. Detected in zygote and throughout embryogenesis (at protein level). Detected in all adult tissues, with the highest expression level in testis.

Its subcellular location is the nucleus. It is found in the cytoplasm. It catalyses the reaction S-ubiquitinyl-[E2 ubiquitin-conjugating enzyme]-L-cysteine + [acceptor protein]-L-lysine = [E2 ubiquitin-conjugating enzyme]-L-cysteine + N(6)-ubiquitinyl-[acceptor protein]-L-lysine.. The protein operates within protein modification; protein ubiquitination. Its function is as follows. Transcriptional coactivator that interacts with numerous nuclear receptors and coactivators and modulates the transcription of target genes. Interacts with chromatin depending on histone H3 modifications, having the highest affinity for histone H3 that is both unmodified at 'Lys-4' (H3K4me0) and acetylated at 'Lys-23' (H3K23ac). Has E3 protein-ubiquitin ligase activity. Promotes ubiquitination and proteasomal degradation of p53/TP53. Plays a role in the regulation of cell proliferation and apoptosis via its effects on p53/TP53 levels. Up-regulates ligand-dependent transcription activation by AR, GCR/NR3C1, thyroid hormone receptor (TR) and ESR1. Modulates transcription activation by retinoic acid (RA) receptors, such as RARA. Plays a role in regulating retinoic acid-dependent proliferation of hepatocytes. Required for normal transition from proliferating neonatal hepatocytes to quiescent adult hepatocytes. Transcriptional coactivator that interacts with numerous nuclear receptors and coactivators and modulates the transcription of target genes. Interacts with chromatin depending on histone H3 modifications, having the highest affinity for histone H3 that is both unmodified at 'Lys-4' (H3K4me0) and acetylated at 'Lys-23' (H3K23ac). Has E3 protein-ubiquitin ligase activity. During the DNA damage response, participates in an autoregulatory feedback loop with TP53. Early in response to DNA damage, ATM kinase phosphorylates TRIM24 leading to its ubiquitination and degradation. After sufficient DNA repair has occurred, TP53 activates TRIM24 transcription, ultimately leading to TRIM24-mediated TP53 ubiquitination and degradation. Plays a role in the regulation of cell proliferation and apoptosis, at least in part via its effects on p53/TP53 levels. Up-regulates ligand-dependent transcription activation by AR, GCR/NR3C1, thyroid hormone receptor (TR) and ESR1. Modulates transcription activation by retinoic acid (RA) receptors, including RARA. Plays a role in regulating retinoic acid-dependent proliferation of hepatocytes. Also participates in innate immunity by mediating the specific 'Lys-63'-linked ubiquitination of TRAF3 leading to activation of downstream signal transduction of the type I IFN pathway. Additionally, negatively regulates NLRP3/CASP1/IL-1beta-mediated pyroptosis and cell migration probably by ubiquitinating NLRP3. This Mus musculus (Mouse) protein is Transcription intermediary factor 1-alpha (Trim24).